Reading from the N-terminus, the 194-residue chain is CASP-like protein 4C1 (194 aa).

Over 1-35 (MRSPHAFRNGESPTLRDHTHFHSTVTAQKLRRFNS) the chain is Cytoplasmic. A helical membrane pass occupies residues 36–56 (LILLLRLASFSFSLASAVFML). Over 57-74 (TNSRGSASPHWYDFDAFR) the chain is Extracellular. The helical transmembrane segment at 75–95 (FVFVANAIVALYSVFEMGTCV) threads the bilayer. Topologically, residues 96-114 (WEFSRETTLWPEAFQVWFD) are cytoplasmic. Residues 115–135 (FGHDQVFSYLLLSAGSAAAAL) traverse the membrane as a helical segment. Topologically, residues 136–157 (ARTMRGGDTCTANKAFCLQSDV) are extracellular. Residues 158–178 (AIGLGFAAFLFLAFSSCFSGF) form a helical membrane-spanning segment. Residues 179–194 (RVACFLITGSRFHLYS) lie on the Cytoplasmic side of the membrane.

The protein belongs to the Casparian strip membrane proteins (CASP) family. As to quaternary structure, homodimer and heterodimers.

It localises to the cell membrane. This chain is CASP-like protein 4C1, found in Arabidopsis thaliana (Mouse-ear cress).